The following is a 330-amino-acid chain: Probable UDP-3-O-acylglucosamine N-acyltransferase 1, mitochondrial (330 aa).

The transit peptide at 1-52 directs the protein to the mitochondrion; the sequence is MANSLRTLFSVSTHGVFLNKRSSYRVRKVFVGMPLRICSEIPRFVSVSCIRS. Residue 160 to 162 coordinates UDP-N-acetyl-alpha-D-glucosamine; that stretch reads FGF. Hexadecanoate contacts are provided by D210 and Q214. Residue H217 is the Proton acceptor of the active site. 3 residues coordinate UDP-N-acetyl-alpha-D-glucosamine: N218, S236, and H254.

This sequence belongs to the transferase hexapeptide repeat family. LpxD subfamily. As to quaternary structure, homotrimer.

Its subcellular location is the mitochondrion. It carries out the reaction a UDP-3-O-[(3R)-3-hydroxyacyl]-alpha-D-glucosamine + a (3R)-hydroxyacyl-[ACP] = a UDP-2-N,3-O-bis[(3R)-3-hydroxyacyl]-alpha-D-glucosamine + holo-[ACP] + H(+). It functions in the pathway glycolipid biosynthesis; lipid IV(A) biosynthesis; lipid IV(A) from (3R)-3-hydroxytetradecanoyl-[acyl-carrier-protein] and UDP-N-acetyl-alpha-D-glucosamine: step 3/6. In terms of biological role, involved in the biosynthesis of lipid A, a phosphorylated glycolipid that in bacteria anchors the lipopolysaccharide to the outer membrane of the cell. Lipid A-like molecules in plants may serve as structural components of the outer membranes of mitochondria and/or chloroplasts, or may be involved in signal transduction or plant defense responses. The polypeptide is Probable UDP-3-O-acylglucosamine N-acyltransferase 1, mitochondrial (LPXD1) (Arabidopsis thaliana (Mouse-ear cress)).